The sequence spans 312 residues: Tetraacyldisaccharide 4'-kinase (312 aa).

60–67 (IAGGSGKT) contacts ATP.

Belongs to the LpxK family.

The enzyme catalyses a lipid A disaccharide + ATP = a lipid IVA + ADP + H(+). Its pathway is glycolipid biosynthesis; lipid IV(A) biosynthesis; lipid IV(A) from (3R)-3-hydroxytetradecanoyl-[acyl-carrier-protein] and UDP-N-acetyl-alpha-D-glucosamine: step 6/6. Its function is as follows. Transfers the gamma-phosphate of ATP to the 4'-position of a tetraacyldisaccharide 1-phosphate intermediate (termed DS-1-P) to form tetraacyldisaccharide 1,4'-bis-phosphate (lipid IVA). This is Tetraacyldisaccharide 4'-kinase from Helicobacter pylori (strain J99 / ATCC 700824) (Campylobacter pylori J99).